Consider the following 325-residue polypeptide: GTP 3',8-cyclase (325 aa).

One can recognise a Radical SAM core domain in the interval 10–229 (GYGRRINYLR…PSLEKIKSED (220 aa)). R19 is a binding site for GTP. Residues C26 and C30 each coordinate [4Fe-4S] cluster. Y32 lines the S-adenosyl-L-methionine pocket. C33 serves as a coordination point for [4Fe-4S] cluster. R69 contributes to the GTP binding site. Position 73 (G73) interacts with S-adenosyl-L-methionine. T100 provides a ligand contact to GTP. S124 is a binding site for S-adenosyl-L-methionine. Position 161 (K161) interacts with GTP. S-adenosyl-L-methionine is bound at residue M195. C257 and C260 together coordinate [4Fe-4S] cluster. 262-264 (RLR) contributes to the GTP binding site. C274 contributes to the [4Fe-4S] cluster binding site.

The protein belongs to the radical SAM superfamily. MoaA family. As to quaternary structure, monomer and homodimer. It depends on [4Fe-4S] cluster as a cofactor.

It catalyses the reaction GTP + AH2 + S-adenosyl-L-methionine = (8S)-3',8-cyclo-7,8-dihydroguanosine 5'-triphosphate + 5'-deoxyadenosine + L-methionine + A + H(+). It participates in cofactor biosynthesis; molybdopterin biosynthesis. In terms of biological role, catalyzes the cyclization of GTP to (8S)-3',8-cyclo-7,8-dihydroguanosine 5'-triphosphate. In Peptoclostridium acidaminophilum (Eubacterium acidaminophilum), this protein is GTP 3',8-cyclase.